A 492-amino-acid polypeptide reads, in one-letter code: 2-succinylbenzoate--CoA ligase (492 aa).

Belongs to the ATP-dependent AMP-binding enzyme family. MenE subfamily.

The enzyme catalyses 2-succinylbenzoate + ATP + CoA = 2-succinylbenzoyl-CoA + AMP + diphosphate. Its pathway is quinol/quinone metabolism; 1,4-dihydroxy-2-naphthoate biosynthesis; 1,4-dihydroxy-2-naphthoate from chorismate: step 5/7. The protein operates within quinol/quinone metabolism; menaquinone biosynthesis. Functionally, converts 2-succinylbenzoate (OSB) to 2-succinylbenzoyl-CoA (OSB-CoA). This is 2-succinylbenzoate--CoA ligase from Staphylococcus aureus (strain Mu3 / ATCC 700698).